The following is a 130-amino-acid chain: uncharacterized protein (130 aa).

Residues 21 to 43 form a helical membrane-spanning segment; the sequence is VAVCTVAAEVLAIFTLVCTRVFI.

The protein resides in the membrane. This is an uncharacterized protein from Saccharomyces cerevisiae (strain ATCC 204508 / S288c) (Baker's yeast).